An 81-amino-acid polypeptide reads, in one-letter code: Small ribosomal subunit protein bS16 (81 aa).

Belongs to the bacterial ribosomal protein bS16 family.

The chain is Small ribosomal subunit protein bS16 from Caldicellulosiruptor saccharolyticus (strain ATCC 43494 / DSM 8903 / Tp8T 6331).